A 242-amino-acid polypeptide reads, in one-letter code: Probable pectate lyase D (242 aa).

Residues 1-17 (MYQKSLLFSLLASSALA) form the signal peptide. Asn-216 carries an N-linked (GlcNAc...) asparagine glycan. The tract at residues 217–242 (DTGAEPEEISEGPSDACQYSEPLSSC) is disordered.

It belongs to the polysaccharide lyase 3 family. Requires Ca(2+) as cofactor.

Its subcellular location is the secreted. It catalyses the reaction Eliminative cleavage of (1-&gt;4)-alpha-D-galacturonan to give oligosaccharides with 4-deoxy-alpha-D-galact-4-enuronosyl groups at their non-reducing ends.. Functionally, pectinolytic enzyme consist of four classes of enzymes: pectin lyase, polygalacturonase, pectin methylesterase and rhamnogalacturonase. Among pectinolytic enzymes, pectin lyase is the most important in depolymerization of pectin, since it cleaves internal glycosidic bonds of highly methylated pectins. Favors pectate, the anion, over pectin, the methyl ester. The sequence is that of Probable pectate lyase D (plyD) from Aspergillus fumigatus (strain CBS 144.89 / FGSC A1163 / CEA10) (Neosartorya fumigata).